We begin with the raw amino-acid sequence, 393 residues long: Protein TsgA (393 aa).

12 consecutive transmembrane segments (helical) span residues 11–31 (WISF…GMVM), 51–71 (FLNA…EIVP), 78–98 (FGFI…SLAL), 101–121 (AAMF…TFLI), 134–154 (LLFT…VAAF), 162–182 (WYWV…LTFG), 206–226 (IGVL…LGFI), 245–265 (ALVS…SFIL), 273–293 (ILTV…TGTQ), 298–318 (WFIL…ITLG), 332–352 (FILT…GPIV), and 361–381 (LLTA…LGFV).

The protein belongs to the major facilitator superfamily. TsgA family.

It localises to the cell inner membrane. The sequence is that of Protein TsgA from Salmonella arizonae (strain ATCC BAA-731 / CDC346-86 / RSK2980).